A 128-amino-acid chain; its full sequence is MIQVLLVIICLAVFPYQGSSIILESGNVNDYEIVYPKKVTVLPTGAMNSAHPCCDPVTCKPKRGEHCISGPCCRNCKFLNAGTICKRGRGDSLHDYCTGVTPDCPRNPNKGESDELEWSAAATGSVLM.

The first 20 residues, 1–20 (MIQVLLVIICLAVFPYQGSS), serve as a signal peptide directing secretion. Positions 21–47 (IILESGNVNDYEIVYPKKVTVLPTGAM) are excised as a propeptide. The region spanning 47 to 112 (MNSAHPCCDP…DCPRNPNKGE (66 aa)) is the Disintegrin domain. Cystine bridges form between cysteine 53–cysteine 76, cysteine 67–cysteine 73, cysteine 72–cysteine 97, and cysteine 85–cysteine 104. A Cell attachment site motif is present at residues 89–91 (RGD). The interval 108 to 128 (PNKGESDELEWSAAATGSVLM) is disordered.

It belongs to the disintegrin family. Dimeric disintegrin subfamily. In terms of assembly, heterodimer with bitisgabonin (bitisgabonin-1 is the name of the heterodimer); disulfide-linked. As to expression, expressed by the venom gland.

The protein localises to the secreted. In terms of biological role, the heterodimer bitisgabonin-1 is a potent inhibitor of the adhesion of the RGD-dependent integrin alpha-5/beta-1 (ITGA5/ITGB1) to immobilized fibronectin. The sequence is that of Disintegrin gabonin-1 from Bitis gabonica (Gaboon adder).